Reading from the N-terminus, the 351-residue chain is Foldase protein PrsA 1 (351 aa).

The first 22 residues, 1–22, serve as a signal peptide directing secretion; that stretch reads MKNSNKLIASVVTLASVMALAA. The N-palmitoyl cysteine moiety is linked to residue Cys-23. Cys-23 carries S-diacylglycerol cysteine lipidation. Positions 145-240 constitute a PpiC domain; the sequence is TPTMAVEMIT…KKFYIVKVTK (96 aa). Low complexity-rich tracts occupy residues 303–317 and 326–351; these read KTKA…SESS and ESEQ…PAAQ. The interval 303–351 is disordered; that stretch reads KTKAASESSTTSESSKAAEENPSESEQTQTSSAEEPTETEAQTQEPAAQ.

The protein belongs to the PrsA family.

It is found in the cell membrane. The enzyme catalyses [protein]-peptidylproline (omega=180) = [protein]-peptidylproline (omega=0). Functionally, plays a major role in protein secretion by helping the post-translocational extracellular folding of several secreted proteins. The chain is Foldase protein PrsA 1 (prsA1) from Streptococcus pyogenes serotype M1.